The following is a 303-amino-acid chain: UDP-3-O-acyl-N-acetylglucosamine deacetylase (303 aa).

Residues histidine 78, histidine 237, and aspartate 241 each contribute to the Zn(2+) site. Histidine 264 (proton donor) is an active-site residue.

Belongs to the LpxC family. Requires Zn(2+) as cofactor.

It catalyses the reaction a UDP-3-O-[(3R)-3-hydroxyacyl]-N-acetyl-alpha-D-glucosamine + H2O = a UDP-3-O-[(3R)-3-hydroxyacyl]-alpha-D-glucosamine + acetate. Its pathway is glycolipid biosynthesis; lipid IV(A) biosynthesis; lipid IV(A) from (3R)-3-hydroxytetradecanoyl-[acyl-carrier-protein] and UDP-N-acetyl-alpha-D-glucosamine: step 2/6. Its function is as follows. Catalyzes the hydrolysis of UDP-3-O-myristoyl-N-acetylglucosamine to form UDP-3-O-myristoylglucosamine and acetate, the committed step in lipid A biosynthesis. This Pseudomonas fluorescens (strain Pf0-1) protein is UDP-3-O-acyl-N-acetylglucosamine deacetylase.